The primary structure comprises 253 residues: Ubiquinone/menaquinone biosynthesis C-methyltransferase UbiE (253 aa).

Residues Thr76, Asp97, and 125–126 (DA) contribute to the S-adenosyl-L-methionine site.

It belongs to the class I-like SAM-binding methyltransferase superfamily. MenG/UbiE family.

It carries out the reaction a 2-demethylmenaquinol + S-adenosyl-L-methionine = a menaquinol + S-adenosyl-L-homocysteine + H(+). It catalyses the reaction a 2-methoxy-6-(all-trans-polyprenyl)benzene-1,4-diol + S-adenosyl-L-methionine = a 5-methoxy-2-methyl-3-(all-trans-polyprenyl)benzene-1,4-diol + S-adenosyl-L-homocysteine + H(+). It functions in the pathway quinol/quinone metabolism; menaquinone biosynthesis; menaquinol from 1,4-dihydroxy-2-naphthoate: step 2/2. Its pathway is cofactor biosynthesis; ubiquinone biosynthesis. Methyltransferase required for the conversion of demethylmenaquinol (DMKH2) to menaquinol (MKH2) and the conversion of 2-polyprenyl-6-methoxy-1,4-benzoquinol (DDMQH2) to 2-polyprenyl-3-methyl-6-methoxy-1,4-benzoquinol (DMQH2). This is Ubiquinone/menaquinone biosynthesis C-methyltransferase UbiE from Azotobacter vinelandii (strain DJ / ATCC BAA-1303).